Here is a 127-residue protein sequence, read N- to C-terminus: uncharacterized protein (127 aa).

Helical transmembrane passes span 16–36, 59–79, and 100–120; these read AVIG…CYVI, LVGA…SFLF, and IIGF…GGVI.

It is found in the cell membrane. This is an uncharacterized protein from Methanocaldococcus jannaschii (strain ATCC 43067 / DSM 2661 / JAL-1 / JCM 10045 / NBRC 100440) (Methanococcus jannaschii).